The following is a 100-amino-acid chain: NADH-quinone oxidoreductase subunit K 2 (100 aa).

The next 3 helical transmembrane spans lie at 4–24, 28–48, and 60–80; these read LWWHISLGVALFVIGAAGVLL, ILVVLMSLELLLNSVNINFIA, and IFAIFVIAITAAEVAVALGIL.

This sequence belongs to the complex I subunit 4L family. As to quaternary structure, NDH-1 is composed of 14 different subunits. Subunits NuoA, H, J, K, L, M, N constitute the membrane sector of the complex.

It is found in the cell inner membrane. The catalysed reaction is a quinone + NADH + 5 H(+)(in) = a quinol + NAD(+) + 4 H(+)(out). In terms of biological role, NDH-1 shuttles electrons from NADH, via FMN and iron-sulfur (Fe-S) centers, to quinones in the respiratory chain. The immediate electron acceptor for the enzyme in this species is believed to be ubiquinone. Couples the redox reaction to proton translocation (for every two electrons transferred, four hydrogen ions are translocated across the cytoplasmic membrane), and thus conserves the redox energy in a proton gradient. This chain is NADH-quinone oxidoreductase subunit K 2, found in Sinorhizobium fredii (strain NBRC 101917 / NGR234).